A 385-amino-acid chain; its full sequence is Guanine nucleotide-binding protein alpha-5 subunit (385 aa).

Glycine 2 is lipidated: N-myristoyl glycine. Residue cysteine 6 is the site of S-palmitoyl cysteine attachment. A G-alpha domain is found at 32 to 385 (RKIKMLLLGV…GKNYEDTNLE (354 aa)). The interval 35–48 (KMLLLGVTDSGKST) is G1 motif. Residues 40-47 (GVTDSGKS), 174-180 (IHMRQTT), 199-203 (DVGGQ), 298-301 (NKKD), and alanine 357 contribute to the GTP site. Positions 47 and 180 each coordinate Mg(2+). A G2 motif region spans residues 172 to 180 (DLIHMRQTT). A G3 motif region spans residues 195 to 204 (IRLIDVGGQK). The tract at residues 294–301 (MLFLNKKD) is G4 motif. Residues 355-360 (TQATVT) are G5 motif.

The protein belongs to the G-alpha family. G proteins are composed of 3 units; alpha, beta and gamma. The alpha chain contains the guanine nucleotide binding site.

Functionally, guanine nucleotide-binding proteins (G proteins) are involved as modulators or transducers in various transmembrane signaling systems. The polypeptide is Guanine nucleotide-binding protein alpha-5 subunit (gpa-5) (Caenorhabditis elegans).